We begin with the raw amino-acid sequence, 624 residues long: Phosphatidylinositol 4-kinase lsb6 (624 aa).

Positions 1–31 (MESTFHSDTLDSFPNYQENSLNTNEEQTNPL) are enriched in polar residues. The disordered stretch occupies residues 1-53 (MESTFHSDTLDSFPNYQENSLNTNEEQTNPLESLRDGWASSNSSSSSSLLLPD). Positions 40-51 (SSNSSSSSSLLL) are enriched in low complexity. A PI3K/PI4K catalytic domain is found at 145-520 (GVFPVLISKG…LLELPNLYVV (376 aa)). The G-loop stretch occupies residues 151 to 157 (ISKGSSG). Positions 346–354 (RNTDRNLDN) are catalytic loop. The activation loop stretch occupies residues 409–429 (AIDNSLAFPYKHPDSWRSFPY).

It belongs to the PI3/PI4-kinase family. Mg(2+) serves as cofactor. It depends on Mn(2+) as a cofactor.

The protein localises to the cell membrane. It localises to the vacuole membrane. The protein resides in the golgi apparatus membrane. It catalyses the reaction a 1,2-diacyl-sn-glycero-3-phospho-(1D-myo-inositol) + ATP = a 1,2-diacyl-sn-glycero-3-phospho-(1D-myo-inositol 4-phosphate) + ADP + H(+). Functionally, may play a role in endocytic and/or exocytic pathways. In Schizosaccharomyces pombe (strain 972 / ATCC 24843) (Fission yeast), this protein is Phosphatidylinositol 4-kinase lsb6 (lsb6).